Here is a 258-residue protein sequence, read N- to C-terminus: Thrombin-like enzyme saxthrombin (258 aa).

The first 18 residues, 1–18 (MVLIRVLANLLILQLSYA), serve as a signal peptide directing secretion. The propeptide occupies 19–24 (QKSSEL). In terms of domain architecture, Peptidase S1 spans 25-249 (VIGGDECNIN…YNHWIQSIIA (225 aa)). 6 cysteine pairs are disulfide-bonded: Cys31/Cys163, Cys50/Cys66, Cys98/Cys256, Cys142/Cys210, Cys174/Cys189, and Cys200/Cys225. Asn44 carries N-linked (GlcNAc...) asparagine glycosylation. Catalysis depends on charge relay system residues His65 and Asp110. The active-site Charge relay system is Ser204. Residue Asn251 is glycosylated (N-linked (GlcNAc...) asparagine).

The protein belongs to the peptidase S1 family. Snake venom subfamily. Monomer. Expressed by the venom gland.

The protein localises to the secreted. Thrombin-like snake venom serine protease that shows strong blood coagulation activity in vitro. The sequence is that of Thrombin-like enzyme saxthrombin from Gloydius intermedius (Central Asian pit viper).